The following is a 540-amino-acid chain: Chaperonin GroEL 4 (540 aa).

ATP contacts are provided by residues 29–32, 86–90, G413, 477–479, and D493; these read TLGP, DGTTT, and NAA.

It belongs to the chaperonin (HSP60) family. As to quaternary structure, forms a cylinder of 14 subunits composed of two heptameric rings stacked back-to-back. Interacts with the co-chaperonin GroES.

The protein resides in the cytoplasm. The catalysed reaction is ATP + H2O + a folded polypeptide = ADP + phosphate + an unfolded polypeptide.. Together with its co-chaperonin GroES, plays an essential role in assisting protein folding. The GroEL-GroES system forms a nano-cage that allows encapsulation of the non-native substrate proteins and provides a physical environment optimized to promote and accelerate protein folding. The protein is Chaperonin GroEL 4 of Frankia alni (strain DSM 45986 / CECT 9034 / ACN14a).